Reading from the N-terminus, the 251-residue chain is Ubiquinone/menaquinone biosynthesis C-methyltransferase UbiE (251 aa).

Residues T74, D95, N123–A124, and S140 contribute to the S-adenosyl-L-methionine site.

This sequence belongs to the class I-like SAM-binding methyltransferase superfamily. MenG/UbiE family.

It carries out the reaction a 2-demethylmenaquinol + S-adenosyl-L-methionine = a menaquinol + S-adenosyl-L-homocysteine + H(+). The enzyme catalyses a 2-methoxy-6-(all-trans-polyprenyl)benzene-1,4-diol + S-adenosyl-L-methionine = a 5-methoxy-2-methyl-3-(all-trans-polyprenyl)benzene-1,4-diol + S-adenosyl-L-homocysteine + H(+). It functions in the pathway quinol/quinone metabolism; menaquinone biosynthesis; menaquinol from 1,4-dihydroxy-2-naphthoate: step 2/2. It participates in cofactor biosynthesis; ubiquinone biosynthesis. Its function is as follows. Methyltransferase required for the conversion of demethylmenaquinol (DMKH2) to menaquinol (MKH2) and the conversion of 2-polyprenyl-6-methoxy-1,4-benzoquinol (DDMQH2) to 2-polyprenyl-3-methyl-6-methoxy-1,4-benzoquinol (DMQH2). This Klebsiella pneumoniae (strain 342) protein is Ubiquinone/menaquinone biosynthesis C-methyltransferase UbiE.